The following is a 347-amino-acid chain: UDP-N-acetylenolpyruvoylglucosamine reductase (347 aa).

Residues 16–187 form the FAD-binding PCMH-type domain; the sequence is AIEQCSHYLV…IAVGLKLPKT (172 aa). The active site involves Arg163. Catalysis depends on Ser233, which acts as the Proton donor. The active site involves Glu328.

Belongs to the MurB family. Requires FAD as cofactor.

Its subcellular location is the cytoplasm. The catalysed reaction is UDP-N-acetyl-alpha-D-muramate + NADP(+) = UDP-N-acetyl-3-O-(1-carboxyvinyl)-alpha-D-glucosamine + NADPH + H(+). It participates in cell wall biogenesis; peptidoglycan biosynthesis. Its function is as follows. Cell wall formation. The chain is UDP-N-acetylenolpyruvoylglucosamine reductase from Vibrio vulnificus (strain YJ016).